A 97-amino-acid chain; its full sequence is Alpha-latrotoxin associated low molecular weight protein 2 (97 aa).

The N-terminal stretch at 1-19 is a signal peptide; sequence MFKLICIVFIATILSITSA. 3 disulfides stabilise this stretch: C36–C72, C52–C68, and C55–C81.

The protein belongs to the arthropod CHH/MIH/GIH/VIH hormone family. As to expression, expressed by the venom gland.

Its subcellular location is the secreted. Functionally, may increase the toxicity of alpha-latrotoxin and/or other venom components. Is non-toxic to mice and to the cockroach Periplaneta americana. This chain is Alpha-latrotoxin associated low molecular weight protein 2, found in Steatoda grossa (False black widow).